The sequence spans 241 residues: UDP-2,3-diacylglucosamine hydrolase (241 aa).

Residues D8, H10, D41, N79, and H114 each contribute to the Mn(2+) site. A substrate-binding site is contributed by 79–80 (NR). Substrate is bound by residues D122, S160, N164, K167, and H195. Mn(2+)-binding residues include H195 and H197.

Belongs to the LpxH family. Requires Mn(2+) as cofactor.

It is found in the cell inner membrane. The catalysed reaction is UDP-2-N,3-O-bis[(3R)-3-hydroxytetradecanoyl]-alpha-D-glucosamine + H2O = 2-N,3-O-bis[(3R)-3-hydroxytetradecanoyl]-alpha-D-glucosaminyl 1-phosphate + UMP + 2 H(+). The protein operates within glycolipid biosynthesis; lipid IV(A) biosynthesis; lipid IV(A) from (3R)-3-hydroxytetradecanoyl-[acyl-carrier-protein] and UDP-N-acetyl-alpha-D-glucosamine: step 4/6. Functionally, hydrolyzes the pyrophosphate bond of UDP-2,3-diacylglucosamine to yield 2,3-diacylglucosamine 1-phosphate (lipid X) and UMP by catalyzing the attack of water at the alpha-P atom. Involved in the biosynthesis of lipid A, a phosphorylated glycolipid that anchors the lipopolysaccharide to the outer membrane of the cell. This chain is UDP-2,3-diacylglucosamine hydrolase, found in Aeromonas hydrophila subsp. hydrophila (strain ATCC 7966 / DSM 30187 / BCRC 13018 / CCUG 14551 / JCM 1027 / KCTC 2358 / NCIMB 9240 / NCTC 8049).